A 315-amino-acid chain; its full sequence is Methionyl-tRNA formyltransferase (315 aa).

Position 107-110 (107-110 (SLLP)) interacts with (6S)-5,6,7,8-tetrahydrofolate.

This sequence belongs to the Fmt family.

The catalysed reaction is L-methionyl-tRNA(fMet) + (6R)-10-formyltetrahydrofolate = N-formyl-L-methionyl-tRNA(fMet) + (6S)-5,6,7,8-tetrahydrofolate + H(+). Functionally, attaches a formyl group to the free amino group of methionyl-tRNA(fMet). The formyl group appears to play a dual role in the initiator identity of N-formylmethionyl-tRNA by promoting its recognition by IF2 and preventing the misappropriation of this tRNA by the elongation apparatus. This is Methionyl-tRNA formyltransferase from Borreliella afzelii (strain PKo) (Borrelia afzelii).